A 507-amino-acid polypeptide reads, in one-letter code: Phytoene dehydrogenase (507 aa).

Val-12–Gly-45 is an FAD binding site.

It belongs to the carotenoid/retinoid oxidoreductase family. FAD is required as a cofactor.

The protein operates within carotenoid biosynthesis; lycopene biosynthesis. Functionally, this enzyme converts phytoene into zeta-carotene via the intermediary of phytofluene by the symmetrical introduction of two double bonds at the C-11 and C-11' positions of phytoene. In Streptomyces griseus, this protein is Phytoene dehydrogenase (crtI).